The chain runs to 103 residues: uncharacterized protein (103 aa).

The chain crosses the membrane as a helical span at residues 38–58; sequence FTTLITIYVAAFYTGVIGAAV.

Its subcellular location is the membrane. This is an uncharacterized protein from Arabidopsis thaliana (Mouse-ear cress).